Reading from the N-terminus, the 698-residue chain is Elongation factor G (698 aa).

The tr-type G domain occupies 11 to 291; the sequence is THFRNIGIAA…AVVDYLPSPL (281 aa). GTP is bound by residues 20–27, 90–94, and 144–147; these read AHIDAGKT, DTPGH, and NKMD.

It belongs to the TRAFAC class translation factor GTPase superfamily. Classic translation factor GTPase family. EF-G/EF-2 subfamily.

It localises to the cytoplasm. Its function is as follows. Catalyzes the GTP-dependent ribosomal translocation step during translation elongation. During this step, the ribosome changes from the pre-translocational (PRE) to the post-translocational (POST) state as the newly formed A-site-bound peptidyl-tRNA and P-site-bound deacylated tRNA move to the P and E sites, respectively. Catalyzes the coordinated movement of the two tRNA molecules, the mRNA and conformational changes in the ribosome. In Deinococcus radiodurans (strain ATCC 13939 / DSM 20539 / JCM 16871 / CCUG 27074 / LMG 4051 / NBRC 15346 / NCIMB 9279 / VKM B-1422 / R1), this protein is Elongation factor G.